A 222-amino-acid polypeptide reads, in one-letter code: Phosphoribosylformylglycinamidine synthase subunit PurQ (222 aa).

The region spanning 3-222 (SAVIQLPGLN…LFESVLGRAA (220 aa)) is the Glutamine amidotransferase type-1 domain. C86 (nucleophile) is an active-site residue. Active-site residues include H196 and E198.

As to quaternary structure, part of the FGAM synthase complex composed of 1 PurL, 1 PurQ and 2 PurS subunits.

The protein localises to the cytoplasm. The catalysed reaction is N(2)-formyl-N(1)-(5-phospho-beta-D-ribosyl)glycinamide + L-glutamine + ATP + H2O = 2-formamido-N(1)-(5-O-phospho-beta-D-ribosyl)acetamidine + L-glutamate + ADP + phosphate + H(+). The enzyme catalyses L-glutamine + H2O = L-glutamate + NH4(+). The protein operates within purine metabolism; IMP biosynthesis via de novo pathway; 5-amino-1-(5-phospho-D-ribosyl)imidazole from N(2)-formyl-N(1)-(5-phospho-D-ribosyl)glycinamide: step 1/2. Functionally, part of the phosphoribosylformylglycinamidine synthase complex involved in the purines biosynthetic pathway. Catalyzes the ATP-dependent conversion of formylglycinamide ribonucleotide (FGAR) and glutamine to yield formylglycinamidine ribonucleotide (FGAM) and glutamate. The FGAM synthase complex is composed of three subunits. PurQ produces an ammonia molecule by converting glutamine to glutamate. PurL transfers the ammonia molecule to FGAR to form FGAM in an ATP-dependent manner. PurS interacts with PurQ and PurL and is thought to assist in the transfer of the ammonia molecule from PurQ to PurL. This Chelativorans sp. (strain BNC1) protein is Phosphoribosylformylglycinamidine synthase subunit PurQ.